A 247-amino-acid chain; its full sequence is Osmotin-like protein NP24-I (247 aa).

The signal sequence occupies residues 1–21 (MGYLTSSFVLFFLLCVTYTYA). 8 cysteine pairs are disulfide-bonded: Cys30-Cys225, Cys72-Cys82, Cys87-Cys93, Cys141-Cys213, Cys146-Cys196, Cys154-Cys164, Cys168-Cys177, and Cys178-Cys183.

The protein belongs to the thaumatin family. In terms of tissue distribution, highest levels of both isoforms found in the outer pericarp, with smaller amounts in the inner pericarp.

It localises to the cytoplasm. Its subcellular location is the vacuole. It carries out the reaction Endohydrolysis of (1-&gt;3)- or (1-&gt;4)-linkages in beta-D-glucans when the glucose residue whose reducing group is involved in the linkage to be hydrolyzed is itself substituted at C-3.. Has antifungal activity against P.betae and F.dahliae. May be involved in disease resistance in tomatoes and/or have a possible role in fruit development and ripening. Binds to beta-glucans and exhibits beta-1,3-D-glucanase activity. In Solanum lycopersicum (Tomato), this protein is Osmotin-like protein NP24-I.